The following is a 541-amino-acid chain: Protein wntless homolog (541 aa).

An N-terminal signal peptide occupies residues 1 to 42; that stretch reads MAGAIIENMSTRKLCIVGGILLVFQVIAFLVGGLIAPSPTTA. Topologically, residues 43–232 are lumenal; sequence VPYMSVKCID…GIHQNGGFTK (190 aa). The chain crosses the membrane as a helical span at residues 233-253; sequence VWFAMKTFLTPSILIIMVWYW. The Cytoplasmic segment spans residues 254–268; sequence RRITLMTRAPVLLEK. A helical transmembrane segment spans residues 269-289; it reads VIFALGISMTFINIPVEWFSI. Topologically, residues 290 to 303 are lumenal; it reads GFDWTWMLLFGDIR. The helical transmembrane segment at 304–324 threads the bilayer; the sequence is QGIFYAMLLSFWIIFCGEHMM. Over 325-331 the chain is Cytoplasmic; the sequence is DQNERNR. A helical transmembrane segment spans residues 332–352; sequence LSGYWKQVGPIAVGSFCLFIF. Topologically, residues 353–380 are lumenal; it reads DMCERGVQLKNPFYSIWTTEVGTELAMA. A helical transmembrane segment spans residues 381 to 401; it reads FIIVAGICLCLYFLFLCFMVF. Over 402-431 the chain is Cytoplasmic; that stretch reads QVFRNISGKQSSLPAMSKARRLHYEGLIFR. A helical membrane pass occupies residues 432-452; the sequence is FKFLMLITLACAAMTVIFFIV. Topologically, residues 453-471 are lumenal; that stretch reads SQVTEGHWKWGDITIQVNS. The chain crosses the membrane as a helical span at residues 472–492; that stretch reads AFFTGIYGMWNLYVFALMFLY. The Cytoplasmic segment spans residues 493–541; sequence APSHKNYGEDQSNGDLGVSSGEELQLTTTITHVDGPTEVYKLARKEAQE.

This sequence belongs to the wntless family.

It localises to the golgi apparatus membrane. The protein resides in the cytoplasmic vesicle membrane. May play an essential role in Wnt signaling pathway. May be required for Wnt-dependent patterning processes. The polypeptide is Protein wntless homolog (WLS) (Gallus gallus (Chicken)).